The following is a 167-amino-acid chain: Ureidoglycolate lyase (167 aa).

The protein belongs to the ureidoglycolate lyase family. In terms of assembly, homodimer. Ni(2+) is required as a cofactor.

It catalyses the reaction (S)-ureidoglycolate = urea + glyoxylate. The protein operates within nitrogen metabolism; (S)-allantoin degradation. Functionally, catalyzes the catabolism of the allantoin degradation intermediate (S)-ureidoglycolate, generating urea and glyoxylate. Involved in the utilization of allantoin as nitrogen source. This is Ureidoglycolate lyase from Pseudomonas fluorescens (strain Pf0-1).